The following is a 153-amino-acid chain: Transcriptional repressor NrdR (153 aa).

The segment at 3-34 (CPFCGKENTRVIDSRPADDCSSIRRRRQCDEC) is a zinc-finger region. The ATP-cone domain occupies 49–139 (LVVIKKDNNR…VYREFKDVNT (91 aa)).

It belongs to the NrdR family. The cofactor is Zn(2+).

In terms of biological role, negatively regulates transcription of bacterial ribonucleotide reductase nrd genes and operons by binding to NrdR-boxes. This chain is Transcriptional repressor NrdR, found in Lachnoclostridium phytofermentans (strain ATCC 700394 / DSM 18823 / ISDg) (Clostridium phytofermentans).